Here is a 231-residue protein sequence, read N- to C-terminus: Orotidine 5'-phosphate decarboxylase (231 aa).

Substrate-binding positions include aspartate 11, lysine 33, 60-69, threonine 117, arginine 179, glutamine 187, glycine 207, and arginine 208; that span reads DLKLHDIPNT. The active-site Proton donor is the lysine 62.

The protein belongs to the OMP decarboxylase family. Type 1 subfamily. Homodimer.

It carries out the reaction orotidine 5'-phosphate + H(+) = UMP + CO2. Its pathway is pyrimidine metabolism; UMP biosynthesis via de novo pathway; UMP from orotate: step 2/2. Its function is as follows. Catalyzes the decarboxylation of orotidine 5'-monophosphate (OMP) to uridine 5'-monophosphate (UMP). This Ehrlichia chaffeensis (strain ATCC CRL-10679 / Arkansas) protein is Orotidine 5'-phosphate decarboxylase.